Here is a 485-residue protein sequence, read N- to C-terminus: MNWEIVIGLETHTQLSTDAKIFSGSSTRFGAAPNTQANVIDLALPGSLPVMNRGAAERAIRFGLAVGGKVAPRSVFARKNYFYPDLPKGYQISQYELPVVLGGSLSFFVGEQEKTVNLTRAHLEEDAGKSLHDDFALASGAPASGIDLNRAGTPLLEIVTEPEMRSAAEAVAYARALHSLVVWLGICDGNMQEGSFRCDANVSVRPVGQKEFGTRTEIKNVNSFRFLERAILFEARRQIELIEDGGTVVQETRLYDADRDETRSMRSKEDAHDYRYFPDPDLPPLVISPEWVEEVRANMPELPAALRERFQRDYGLSAYDAAQLSASRGLASYFEDVARALPAGQAKQAANWIMGEVTATLNREEKDIADAPVQAPALAALIGRIIDGTISNKIARDVFSAMWAGEHGGQPDAIIEARGLKQISDTGAIGAMIDEVLAANPAIVAEYRAGKQKAFNSLVGQIMKAAKGKANPQQVNELLKQKLEG.

The protein belongs to the GatB/GatE family. GatB subfamily. As to quaternary structure, heterotrimer of A, B and C subunits.

It catalyses the reaction L-glutamyl-tRNA(Gln) + L-glutamine + ATP + H2O = L-glutaminyl-tRNA(Gln) + L-glutamate + ADP + phosphate + H(+). The enzyme catalyses L-aspartyl-tRNA(Asn) + L-glutamine + ATP + H2O = L-asparaginyl-tRNA(Asn) + L-glutamate + ADP + phosphate + 2 H(+). Allows the formation of correctly charged Asn-tRNA(Asn) or Gln-tRNA(Gln) through the transamidation of misacylated Asp-tRNA(Asn) or Glu-tRNA(Gln) in organisms which lack either or both of asparaginyl-tRNA or glutaminyl-tRNA synthetases. The reaction takes place in the presence of glutamine and ATP through an activated phospho-Asp-tRNA(Asn) or phospho-Glu-tRNA(Gln). The polypeptide is Aspartyl/glutamyl-tRNA(Asn/Gln) amidotransferase subunit B (Bordetella petrii (strain ATCC BAA-461 / DSM 12804 / CCUG 43448)).